The primary structure comprises 778 residues: Receptor like protein 28 (778 aa).

An N-terminal signal peptide occupies residues 1–24 (MSGSHLRLRFLSLLLLCCVSSSTS). Over 25–739 (SLFTFSYPVL…EEQEQVLNWK (715 aa)) the chain is Extracellular. Asparagine 60, asparagine 72, asparagine 93, asparagine 106, asparagine 111, asparagine 147, asparagine 170, and asparagine 173 each carry an N-linked (GlcNAc...) asparagine glycan. 5 LRR repeats span residues 99 to 123 (FHQL…EFGN), 125 to 147 (NKVE…SFSN), 148 to 171 (LSQL…VQNL), 172 to 195 (TNLS…LLMM), and 197 to 219 (FLSY…TSSK). The LRR 6; degenerate repeat unit spans residues 220-240 (LEILYLGLKPFEGQILEPISK). LRR repeat units follow at residues 241–265 (LINL…LFSS), 266–291 (LKSL…LYIP), 293–313 (TLEK…ILKT), 314–338 (LQKL…LWRL), 340–363 (RLRS…VLVN), and 364–387 (SSME…PLSI). An N-linked (GlcNAc...) asparagine glycan is attached at asparagine 253. 2 N-linked (GlcNAc...) asparagine glycosylation sites follow: asparagine 348 and asparagine 363. One copy of the LRR 13; degenerate repeat lies at 388–407 (KAFSAGYNNFSGEIPLSICN). 5 N-linked (GlcNAc...) asparagine glycosylation sites follow: asparagine 396, asparagine 407, asparagine 420, asparagine 431, and asparagine 476. 10 LRR repeats span residues 408-429 (RSSL…PQCL), 430-453 (SNLT…LCAG), 455-477 (SLQT…LLNC), 479-500 (SLEF…WLKA), 501-525 (LPNL…HQSP), 528-552 (FPEL…YFVN), 601-625 (LNSY…IGLL), 626-649 (KELI…LANA), 650-673 (TELE…LKTL), and 678-700 (YINV…SSFE). 2 N-linked (GlcNAc...) asparagine glycosylation sites follow: asparagine 632 and asparagine 648. N-linked (GlcNAc...) asparagine glycosylation occurs at asparagine 680. Residues 740–760 (AVATGYGTGLLLGLAIAQVIA) traverse the membrane as a helical segment. The Cytoplasmic portion of the chain corresponds to 761–778 (SYKPDWLVKIIGLFRFCF).

Belongs to the RLP family.

The protein resides in the cell membrane. The polypeptide is Receptor like protein 28 (Arabidopsis thaliana (Mouse-ear cress)).